The sequence spans 369 residues: Opsin Rh6 (369 aa).

Residues 1–46 (MASLHPPSFAYMRDGRNLSLAESVPAEIMHMVDPYWYQWPPLEPMW) are Extracellular-facing. N17 carries an N-linked (GlcNAc...) asparagine glycan. Residues 47–71 (FGIIGFVIAILGTMSLAGNFIVMYI) traverse the membrane as a helical segment. Topologically, residues 72–83 (FTSSKGLRTPSN) are cytoplasmic. The helical transmembrane segment at 84-109 (MFVVNLAFSDFMMMFTMFPPVVLNGF) threads the bilayer. Over 110-123 (YGTWIMGPFLCELY) the chain is Extracellular. C120 and C197 are oxidised to a cystine. The chain crosses the membrane as a helical span at residues 124-143 (GMFGSLFGCVSIWSMTLIAY). At 144 to 162 (DRYCVIVKGMARKPLTATA) the chain is on the cytoplasmic side. The chain crosses the membrane as a helical span at residues 163 to 186 (AVLRLMVVWTICGAWALMPLFGWN). The Extracellular portion of the chain corresponds to 187 to 210 (RYVPEGNMTACGTDYFAKDWWNRS). N-linked (GlcNAc...) asparagine glycosylation is found at N193 and N208. Residues 211–238 (YIIVYSLWVYLTPLLTIIFSYWHIMKAV) form a helical membrane-spanning segment. Topologically, residues 239–274 (AAHEKAMREQAKKMNVASLRNSEADKSKAIEIKLAK) are cytoplasmic. The helical transmembrane segment at 275-298 (VALTTISLWFFAWTPYTIINYAGI) threads the bilayer. Topologically, residues 299–305 (FESMHLS) are extracellular. The helical transmembrane segment at 306 to 330 (PLSTICGSVFAKANAVCNPIVYGLS) threads the bilayer. Position 317 is an N6-(retinylidene)lysine (K317). Residues 331–369 (HPKYKQVLREKMPCLACGKDDLTSDSRTQATAEISESQA) are Cytoplasmic-facing.

Belongs to the G-protein coupled receptor 1 family. Opsin subfamily. Phosphorylated on some or all of the serine and threonine residues present in the C-terminal region. Each Drosophila eye is composed of 800 facets or ommatidia. Each ommatidium contains 8 photoreceptor cells (R1-R8), the R1 to R6 cells are outer cells, while R7 and R8 are inner cells. Rh6 is expressed in a subset of R8 cells, most likely expressed in the subset of R8 cells paired with Rh4-expressing R7 cells (R7y).

It localises to the membrane. Its function is as follows. Visual pigments are the light-absorbing molecules that mediate vision. They consist of an apoprotein, opsin, covalently linked to cis-retinal. This Drosophila melanogaster (Fruit fly) protein is Opsin Rh6 (Rh6).